We begin with the raw amino-acid sequence, 86 residues long: Small ribosomal subunit protein bS20 (86 aa).

Residues 1–22 (MANIKSAKKRAVQSEKRRKHNA) are compositionally biased toward basic residues. The interval 1-28 (MANIKSAKKRAVQSEKRRKHNASGRSMM) is disordered.

Belongs to the bacterial ribosomal protein bS20 family.

Functionally, binds directly to 16S ribosomal RNA. The polypeptide is Small ribosomal subunit protein bS20 (Serratia proteamaculans (strain 568)).